The following is a 147-amino-acid chain: Lysozyme C-3 (147 aa).

Positions 1–18 (MKALVILGLLFLSVAVQG) are cleaved as a signal peptide. The C-type lysozyme domain occupies 19–147 (KVFERCELAR…VSSYVEGCKL (129 aa)). 4 cysteine pairs are disulfide-bonded: C24–C145, C48–C133, C83–C99, and C95–C113. Residues E53 and D71 contribute to the active site.

This sequence belongs to the glycosyl hydrolase 22 family. In terms of assembly, monomer. As to expression, expressed in stomach.

The protein localises to the secreted. The catalysed reaction is Hydrolysis of (1-&gt;4)-beta-linkages between N-acetylmuramic acid and N-acetyl-D-glucosamine residues in a peptidoglycan and between N-acetyl-D-glucosamine residues in chitodextrins.. Functionally, lysozymes have primarily a bacteriolytic function; those in tissues and body fluids are associated with the monocyte-macrophage system and enhance the activity of immunoagents. The protein is Lysozyme C-3 of Ovis aries (Sheep).